A 450-amino-acid chain; its full sequence is Benzene 1,2-dioxygenase subunit alpha (450 aa).

In terms of domain architecture, Rieske spans 56–163; sequence LLGHETHIRK…VETYKGLIFA (108 aa). [2Fe-2S] cluster contacts are provided by Cys-96, His-98, Cys-116, and His-119. Fe cation contacts are provided by His-222 and His-228.

The protein belongs to the bacterial ring-hydroxylating dioxygenase alpha subunit family. This dioxygenase system consists of four proteins: the two subunits of the hydroxylase component (BedC1 and BedC2), a ferredoxin (BedB) and a ferredoxin reductase (BedA). [2Fe-2S] cluster serves as cofactor. Requires Fe cation as cofactor.

It catalyses the reaction benzene + NADH + O2 + H(+) = cis-1,2-dihydrobenzene-1,2-diol + NAD(+). Its pathway is aromatic compound metabolism; benzene degradation; catechol from benzene: step 1/2. The polypeptide is Benzene 1,2-dioxygenase subunit alpha (bedC1) (Pseudomonas putida (Arthrobacter siderocapsulatus)).